We begin with the raw amino-acid sequence, 106 residues long: UPF0145 protein FTL_1249 (106 aa).

The protein belongs to the UPF0145 family.

This is UPF0145 protein FTL_1249 from Francisella tularensis subsp. holarctica (strain LVS).